The primary structure comprises 674 residues: Probable copper-transporting P-type ATPase B (674 aa).

The tract at residues Met-1–Ala-22 is disordered. Basic and acidic residues predominate over residues Met-7–Ser-19. 6 consecutive transmembrane segments (helical) span residues Phe-32–Asn-52, Phe-57–Gly-77, Gly-95–Phe-115, Thr-127–Ile-147, Gly-284–Ile-304, and Leu-315–Thr-335. Asp-367 serves as the catalytic 4-aspartylphosphate intermediate. Mg(2+) contacts are provided by Asp-565 and Asp-569. A run of 2 helical transmembrane segments spans residues Leu-623–Gly-645 and Ser-649–Leu-671.

Belongs to the cation transport ATPase (P-type) (TC 3.A.3) family. Type IB subfamily.

Its subcellular location is the cell membrane. It catalyses the reaction Cu(+)(in) + ATP + H2O = Cu(+)(out) + ADP + phosphate + H(+). Involved in copper transport. The protein is Probable copper-transporting P-type ATPase B (copB) of Staphylococcus aureus (strain USA300 / TCH1516).